A 443-amino-acid polypeptide reads, in one-letter code: Zinc finger protein 713 (443 aa).

Polar residues predominate over residues 1–10 (MPSQNAVFSQ). Disordered regions lie at residues 1–23 (MPSQNAVFSQEGNMEEEEMNDGS) and 99–118 (DTHPDGENRPEIKKSTTSQN). Residues 32–102 (LTFQDVAVDF…ERDSLLDTHP (71 aa)) form the KRAB domain. Basic and acidic residues predominate over residues 99–112 (DTHPDGENRPEIKK). The segment at 255–280 (HTAEKPSECGKAFSHTSSLSQPQMLL) adopts a C2H2-type 1; degenerate zinc-finger fold. 5 consecutive C2H2-type zinc fingers follow at residues 286-308 (YKCDECGKRFSQRIHLIQHQRIH), 314-336 (FICNGCGKAFRQHSSFTQHLRIH), 342-364 (YKCNQCGKAFSRITSLTEHHRLH), 370-392 (YECGFCGKAFSQRTHLNQHERTH), and 398-420 (YKCNECGKAFSQSAHLNQHRKIH).

It belongs to the krueppel C2H2-type zinc-finger protein family. In terms of tissue distribution, expressed in fetal and adult brain.

The protein resides in the nucleus. Its function is as follows. May be involved in transcriptional regulation. The polypeptide is Zinc finger protein 713 (Homo sapiens (Human)).